Consider the following 291-residue polypeptide: 4-hydroxy-tetrahydrodipicolinate synthase (291 aa).

Thr-45 contacts pyruvate. Tyr-133 acts as the Proton donor/acceptor in catalysis. Catalysis depends on Lys-161, which acts as the Schiff-base intermediate with substrate. Residue Ile-203 coordinates pyruvate.

The protein belongs to the DapA family. As to quaternary structure, homotetramer; dimer of dimers.

It is found in the cytoplasm. The catalysed reaction is L-aspartate 4-semialdehyde + pyruvate = (2S,4S)-4-hydroxy-2,3,4,5-tetrahydrodipicolinate + H2O + H(+). It functions in the pathway amino-acid biosynthesis; L-lysine biosynthesis via DAP pathway; (S)-tetrahydrodipicolinate from L-aspartate: step 3/4. In terms of biological role, catalyzes the condensation of (S)-aspartate-beta-semialdehyde [(S)-ASA] and pyruvate to 4-hydroxy-tetrahydrodipicolinate (HTPA). The sequence is that of 4-hydroxy-tetrahydrodipicolinate synthase from Teredinibacter turnerae (strain ATCC 39867 / T7901).